A 592-amino-acid chain; its full sequence is MNGTTSSINFLTSDDDASAAAMEAFIGTNHHSSLFPPPPQQPPQPQFNEDTLQQRLQALIESAGENWTYAIFWQISHDFDSSTGDNTVILGWGDGYYKGEEDKEKKKNNTNTAEQEHRKRVIRELNSLISGGIGVSDESNDEEVTDTEWFFLVSMTQSFVNGVGLPGESFLNSRVIWLSGSGALTGSGCERAGQGQIYGLKTMVCIATQNGVVELGSSEVISQSSDLMHKVNNLFNFNNGGGNNGVEASSWGFNLNPDQGENDPALWISEPTNTGIESPARVNNGNNSNSNSKSDSHQISKLEKNDISSVENQNRQSSCLVEKDLTFQGGLLKSNETLSFCGNESSKKRTSVSKGSNNDEGMLSFSTVVRSAANDSDHSDLEASVVKEAIVVEPPEKKPRKRGRKPANGREEPLNHVEAERQRREKLNQRFYSLRAVVPNVSKMDKASLLGDAISYINELKSKLQQAESDKEEIQKKLDGMSKEGNNGKGCGSRAKERKSSNQDSTASSIEMEIDVKIIGWDVMIRVQCGKKDHPGARFMEALKELDLEVNHASLSVVNDLMIQQATVKMGSQFFNHDQLKVALMTKVGENY.

The JAZ-interaction domain stretch occupies residues 82–141; it reads STGDNTVILGWGDGYYKGEEDKEKKKNNTNTAEQEHRKRVIRELNSLISGGIGVSDESND. Disordered regions lie at residues 261–313, 341–361, 393–422, and 465–508; these read ENDP…VENQ, CGNE…NDEG, EPPE…AERQ, and QQAE…STAS. Low complexity predominate over residues 278-293; sequence SPARVNNGNNSNSNSK. Positions 294–306 are enriched in basic and acidic residues; the sequence is SDSHQISKLEKND. Residues 352–361 show a composition bias toward polar residues; the sequence is VSKGSNNDEG. The span at 398 to 407 shows a compositional bias: basic residues; the sequence is KPRKRGRKPA. 2 stretches are compositionally biased toward basic and acidic residues: residues 408–422 and 468–482; these read NGRE…AERQ and ESDK…DGMS. One can recognise a bHLH domain in the interval 411-460; sequence EEPLNHVEAERQRREKLNQRFYSLRAVVPNVSKMDKASLLGDAISYINEL.

As to quaternary structure, homo- and heterodimer. Interacts with MYB28, MYB29, MYB34, MYB51, MYB76, MYB122, MYC2, MYC4, AFPH2/NINJA and the JAZ repressors TIFY10A/JAZ1, TIFY10B/JAZ2, TIFY6B/JAZ3, TIFY11A/JAZ5, TIFY11B/JAZ6, TIFY5B/JAZ7, TIFY5A/JAZ8, TIFY7/JAZ9, TIFY9/JAZ10, TIFY3A/JAZ11 and TIFY3B/JAZ12. Constitutively expressed in roots, stems, leaves, flowers, and seedlings.

It is found in the nucleus. Functionally, transcription factor involved in tryptophan, jasmonic acid (JA) and other stress-responsive gene regulation. With MYC2 and MYC4, controls additively subsets of JA-dependent responses. Can form complexes with all known glucosinolate-related MYBs to regulate glucosinolate biosynthesis. Binds to the G-box (5'-CACGTG-3') of promoters. Activates multiple TIFY/JAZ promoters. The polypeptide is Transcription factor MYC3 (MYC3) (Arabidopsis thaliana (Mouse-ear cress)).